A 425-amino-acid polypeptide reads, in one-letter code: MLLTFAPIFLLISSIVAAPTLQLQRKGLEWDYQNDKIRGVNLGGWFVLEPYITPSLFSVWSNGEDDLNTPVDEYHYTQKLGKETALSRLEAHWSSWYTEADFAQMKYLGINAVRIPIGYWAFQLLDNDPYVQGQVKYLDQALEWCRNNGLYAWVDLHGAPGSQNGFDNSGLRDSYKFQDDDDVKVTLEVLKTIGAKYGGSDYEDVVIGIELLNEPLGPVLDMDGLRQFYQDGYSEIRNNDGVESYNAIIIHDAFQQTDHYWDNFMQVSGGYWNVVVDHHHYQVFDQAALELLIEDHIKTACNWGTTHKDEAHWNIVGEWSSALTDCAKWLNGVGHGARWSGNYDNCPYIDSCLSYTDLSGWTDEYKTNVRKYTEAQLDAWEQVGGWFFWCWKTESAPEWDFQALTNAGLIPQPLNDRQYPNQCGY.

Positions 1-17 are cleaved as a signal peptide; sequence MLLTFAPIFLLISSIVA. Residue Glu-214 is the Proton donor of the active site. 2 cysteine pairs are disulfide-bonded: Cys-301-Cys-423 and Cys-326-Cys-352. Catalysis depends on Lys-328, which acts as the Nucleophile.

It belongs to the glycosyl hydrolase 5 (cellulase A) family.

It is found in the secreted. It carries out the reaction Successive hydrolysis of beta-D-glucose units from the non-reducing ends of (1-&gt;3)-beta-D-glucans, releasing alpha-glucose.. Beta-glucanases participate in the metabolism of beta-glucan, the main structural component of the cell wall. It could also function biosynthetically as a transglycosylase. In Candida oleophila (Yeast), this protein is Glucan 1,3-beta-glucosidase (EXG1).